We begin with the raw amino-acid sequence, 289 residues long: Glycine--tRNA ligase alpha subunit (289 aa).

This sequence belongs to the class-II aminoacyl-tRNA synthetase family. As to quaternary structure, tetramer of two alpha and two beta subunits.

The protein resides in the cytoplasm. It catalyses the reaction tRNA(Gly) + glycine + ATP = glycyl-tRNA(Gly) + AMP + diphosphate. This is Glycine--tRNA ligase alpha subunit from Rickettsia akari (strain Hartford).